We begin with the raw amino-acid sequence, 434 residues long: Alpha-enolase (434 aa).

Ser-40 provides a ligand contact to Mg(2+). Substrate is bound by residues His-158 and Glu-167. Glu-210 acts as the Proton donor in catalysis. Mg(2+) contacts are provided by Asp-245, Glu-293, and Asp-318. Glu-293 and Asp-318 together coordinate substrate. Lys-343 (proton acceptor) is an active-site residue. Substrate-binding positions include Ser-370–Ser-373 and Lys-394.

This sequence belongs to the enolase family. In terms of assembly, homodimer. Mg(2+) is required as a cofactor.

The protein localises to the cytoplasm. The enzyme catalyses (2R)-2-phosphoglycerate = phosphoenolpyruvate + H2O. Its pathway is carbohydrate degradation; glycolysis; pyruvate from D-glyceraldehyde 3-phosphate: step 4/5. This chain is Alpha-enolase (ENO1), found in Gallus gallus (Chicken).